We begin with the raw amino-acid sequence, 449 residues long: Ribosomal protein uS12 methylthiotransferase RimO (449 aa).

In terms of domain architecture, MTTase N-terminal spans 5-116 (PTIAISHLGC…IVDVVQRVEN (112 aa)). Residues C14, C50, C79, C154, C158, and C161 each coordinate [4Fe-4S] cluster. Positions 140–369 (TTTEGVAYLR…MEVQQPISIK (230 aa)) constitute a Radical SAM core domain. The TRAM domain occupies 372–438 (QNCIGQTVPV…VYDLYGKTNL (67 aa)).

The protein belongs to the methylthiotransferase family. RimO subfamily. [4Fe-4S] cluster is required as a cofactor.

It localises to the cytoplasm. It carries out the reaction L-aspartate(89)-[ribosomal protein uS12]-hydrogen + (sulfur carrier)-SH + AH2 + 2 S-adenosyl-L-methionine = 3-methylsulfanyl-L-aspartate(89)-[ribosomal protein uS12]-hydrogen + (sulfur carrier)-H + 5'-deoxyadenosine + L-methionine + A + S-adenosyl-L-homocysteine + 2 H(+). Functionally, catalyzes the methylthiolation of an aspartic acid residue of ribosomal protein uS12. The protein is Ribosomal protein uS12 methylthiotransferase RimO of Rippkaea orientalis (strain PCC 8801 / RF-1) (Cyanothece sp. (strain PCC 8801)).